The sequence spans 37 residues: uncharacterized protein (37 aa).

A helical membrane pass occupies residues 1–21 (MQDLEIFLSIFAFIFVFYFGA).

The protein resides in the endoplasmic reticulum membrane. This is an uncharacterized protein from Saccharomyces cerevisiae (strain ATCC 204508 / S288c) (Baker's yeast).